The chain runs to 258 residues: Hydroxyacylglutathione hydrolase (258 aa).

Residues His52, His54, Asp56, His57, His109, Asp126, and His164 each coordinate Zn(2+).

It belongs to the metallo-beta-lactamase superfamily. Glyoxalase II family. Monomer. The cofactor is Zn(2+).

It catalyses the reaction an S-(2-hydroxyacyl)glutathione + H2O = a 2-hydroxy carboxylate + glutathione + H(+). It functions in the pathway secondary metabolite metabolism; methylglyoxal degradation; (R)-lactate from methylglyoxal: step 2/2. Functionally, thiolesterase that catalyzes the hydrolysis of S-D-lactoyl-glutathione to form glutathione and D-lactic acid. In Xylella fastidiosa (strain M23), this protein is Hydroxyacylglutathione hydrolase.